The following is a 236-amino-acid chain: 7-cyano-7-deazaguanine synthase (236 aa).

7–17 provides a ligand contact to ATP; sequence CSGGLDSVSLA. Residues Cys185, Cys193, Cys196, and Cys199 each coordinate Zn(2+).

It belongs to the QueC family. It depends on Zn(2+) as a cofactor.

It catalyses the reaction 7-carboxy-7-deazaguanine + NH4(+) + ATP = 7-cyano-7-deazaguanine + ADP + phosphate + H2O + H(+). Its pathway is purine metabolism; 7-cyano-7-deazaguanine biosynthesis. In terms of biological role, catalyzes the ATP-dependent conversion of 7-carboxy-7-deazaguanine (CDG) to 7-cyano-7-deazaguanine (preQ(0)). In Rhizobium etli (strain CIAT 652), this protein is 7-cyano-7-deazaguanine synthase.